A 258-amino-acid chain; its full sequence is Acetylglutamate kinase (258 aa).

Residues 41-42 (GG), R63, and N156 contribute to the substrate site.

It belongs to the acetylglutamate kinase family. ArgB subfamily. Homodimer.

It is found in the cytoplasm. It catalyses the reaction N-acetyl-L-glutamate + ATP = N-acetyl-L-glutamyl 5-phosphate + ADP. Its pathway is amino-acid biosynthesis; L-arginine biosynthesis; N(2)-acetyl-L-ornithine from L-glutamate: step 2/4. Functionally, catalyzes the ATP-dependent phosphorylation of N-acetyl-L-glutamate. The sequence is that of Acetylglutamate kinase from Geobacillus stearothermophilus (Bacillus stearothermophilus).